The sequence spans 897 residues: MGASLPPKEANLFKLIVKSYETKQYKKGLKAADAILKKFPDHGETLSMKGLTLNCMDRKTEAYELVRLGVKNDIKSHVCWHVLGLLYRSDREYREAIKCYRNALRIDPDNLEILRDLSLLQAQMRDLSGFVETRQQLLTLKPNHRMNWIGFAVSQHLNANASKAVEILEAYEGTLEDDYPPENELIEHTEMILYKVSLLEESGSFDKALEELHKKEPKIVDKLSYKEQEVSLLSKVGRLEEANKLYRVLLSMNPDNYRYHEGLQKCLGLYSESGQYSSDQIEKLNALYQSLSEQYTRSSAVKRIPLDFLQDENFKEAVAKYIKPLLTKGVPSLFSDLSSLYDHPRKPDILEQLVVEMKHSIGTTGSFPGSDVKEPPSTLLWTLFFLAQHYDRRGQYDVALCKIDEAIAHTPTVIDLYSVKSRIMKHAGDLTAAAALADEARGMDLADRYINSECVKRMLQADQVPLAEKTAVLFTKEGDQLNNLHDMQCMWYDLASGDSYFRQGDLGRALKKFLAVEKHYADISEDQFDFHSYCLRKMTLRSYVDMLKFQDRLHSFPYFHKAAIRAIRCYLKLHDSPKSTAGEDEMSKLAPAQKKKIKKQKKAEARAKKEAESKSEESTASGASKSGKRNVKPVDPDPHGQKLIQVEEPMAEASKYLRLLQKHSPNSLETHLLSFEVNMRKQKFLLAFQAVKQLLKLGAENPDSHRSLVKFFLMTESISAPTTEAEKLRWRVLEAERPSISQLQNKSLMEANKEFLGRHEDSLVHRAAYAEMLYILDPSKKTEAIKIIEDSTNKVVQTNEALGQAREWKLKDCIAVHTLLDTVLLDSQAASRWKSRCAEYFPCSTHFEGKHCSLMPDSVYNSSRKSNENGDTPNHPMGQTELSDGQLEAFKSLSVAT.

TPR repeat units lie at residues 77–110 (HVCW…DPDN), 111–144 (LEIL…KPNH), 189–222 (TEMI…IVDK), 223–256 (LSYK…NPDN), 298–331 (SSAV…KGVP), 380–413 (LWTL…TPTV), and 488–523 (QCMW…YADI). Disordered regions lie at residues 578-640 (KSTA…DPHG) and 863-897 (SRKS…SVAT). Basic and acidic residues predominate over residues 602–617 (KAEARAKKEAESKSEE). Positions 863–872 (SRKSNENGDT) are enriched in polar residues.

Part of the NatA complex. Associates with ribosomes. Interacts with NAA10. As to expression, expressed in leaves, roots, shoots and flowers.

Functionally, auxiliary subunit of the NatA N-alpha-acetyltransferase complex. Required for male gametocyte development, embryogenesis, suspensor development and the formation of the quiescent center (QC) in the root meristem. Involved in plant immunity through the regulation of SNC1 stability. Required for embryo development. The sequence is that of N-terminal acetyltransferase A complex auxiliary subunit NAA15 from Arabidopsis thaliana (Mouse-ear cress).